The primary structure comprises 477 residues: ATP synthase subunit beta (477 aa).

Residue G163–T170 participates in ATP binding.

Belongs to the ATPase alpha/beta chains family. F-type ATPases have 2 components, CF(1) - the catalytic core - and CF(0) - the membrane proton channel. CF(1) has five subunits: alpha(3), beta(3), gamma(1), delta(1), epsilon(1). CF(0) has four main subunits: a(1), b(1), b'(1) and c(9-12).

The protein localises to the cellular thylakoid membrane. The catalysed reaction is ATP + H2O + 4 H(+)(in) = ADP + phosphate + 5 H(+)(out). Functionally, produces ATP from ADP in the presence of a proton gradient across the membrane. The catalytic sites are hosted primarily by the beta subunits. This chain is ATP synthase subunit beta, found in Synechococcus sp. (strain JA-3-3Ab) (Cyanobacteria bacterium Yellowstone A-Prime).